The following is a 98-amino-acid chain: NADH-ubiquinone oxidoreductase chain 4L (98 aa).

Helical transmembrane passes span 1-21 (MALIYTNTLLAFTISLLGLLL), 29-49 (SLLCLEGMMLSMFVMVAVMIL), and 61-81 (IVLLVFAACEAALGLSLLVMV).

Belongs to the complex I subunit 4L family. In terms of assembly, core subunit of respiratory chain NADH dehydrogenase (Complex I) which is composed of 45 different subunits.

It localises to the mitochondrion inner membrane. It carries out the reaction a ubiquinone + NADH + 5 H(+)(in) = a ubiquinol + NAD(+) + 4 H(+)(out). Functionally, core subunit of the mitochondrial membrane respiratory chain NADH dehydrogenase (Complex I) which catalyzes electron transfer from NADH through the respiratory chain, using ubiquinone as an electron acceptor. Part of the enzyme membrane arm which is embedded in the lipid bilayer and involved in proton translocation. This is NADH-ubiquinone oxidoreductase chain 4L (MT-ND4L) from Rhinolophus monoceros (Formosan lesser horseshoe bat).